The chain runs to 301 residues: Probable alpha-L-glutamate ligase 1 (301 aa).

Residues 104–287 (LQLLSRKGIG…VTEPIVEYIE (184 aa)) form the ATP-grasp domain. ATP is bound by residues Lys-141, 178–179 (EY), Asp-187, and 211–213 (RSN). 3 residues coordinate Mg(2+): Asp-248, Glu-260, and Asn-262. Mn(2+) is bound by residues Asp-248, Glu-260, and Asn-262.

Belongs to the RimK family. It depends on Mg(2+) as a cofactor. Requires Mn(2+) as cofactor.

The chain is Probable alpha-L-glutamate ligase 1 from Shewanella baltica (strain OS155 / ATCC BAA-1091).